We begin with the raw amino-acid sequence, 581 residues long: Proline--tRNA ligase (581 aa).

Belongs to the class-II aminoacyl-tRNA synthetase family. ProS type 1 subfamily. In terms of assembly, homodimer.

Its subcellular location is the cytoplasm. The enzyme catalyses tRNA(Pro) + L-proline + ATP = L-prolyl-tRNA(Pro) + AMP + diphosphate. In terms of biological role, catalyzes the attachment of proline to tRNA(Pro) in a two-step reaction: proline is first activated by ATP to form Pro-AMP and then transferred to the acceptor end of tRNA(Pro). As ProRS can inadvertently accommodate and process non-cognate amino acids such as alanine and cysteine, to avoid such errors it has two additional distinct editing activities against alanine. One activity is designated as 'pretransfer' editing and involves the tRNA(Pro)-independent hydrolysis of activated Ala-AMP. The other activity is designated 'posttransfer' editing and involves deacylation of mischarged Ala-tRNA(Pro). The misacylated Cys-tRNA(Pro) is not edited by ProRS. The sequence is that of Proline--tRNA ligase from Kosmotoga olearia (strain ATCC BAA-1733 / DSM 21960 / TBF 19.5.1).